Consider the following 641-residue polypeptide: 1-deoxy-D-xylulose-5-phosphate synthase (641 aa).

Residues His79 and 120-122 contribute to the thiamine diphosphate site; that span reads AHS. Asp151 serves as a coordination point for Mg(2+). Residues 152–153, Asn180, Tyr290, and Glu372 each bind thiamine diphosphate; that span reads GA. Residue Asn180 participates in Mg(2+) binding.

It belongs to the transketolase family. DXPS subfamily. As to quaternary structure, homodimer. Mg(2+) is required as a cofactor. The cofactor is thiamine diphosphate.

It catalyses the reaction D-glyceraldehyde 3-phosphate + pyruvate + H(+) = 1-deoxy-D-xylulose 5-phosphate + CO2. Its pathway is metabolic intermediate biosynthesis; 1-deoxy-D-xylulose 5-phosphate biosynthesis; 1-deoxy-D-xylulose 5-phosphate from D-glyceraldehyde 3-phosphate and pyruvate: step 1/1. Its function is as follows. Catalyzes the acyloin condensation reaction between C atoms 2 and 3 of pyruvate and glyceraldehyde 3-phosphate to yield 1-deoxy-D-xylulose-5-phosphate (DXP). This Bradyrhizobium sp. (strain ORS 278) protein is 1-deoxy-D-xylulose-5-phosphate synthase.